The chain runs to 314 residues: MAGNSQRRGAVRKPGTKKGPTVGSGGVRRRGLEGRGATPPAHMRPNHPAAKKARAAAKAQQQRAGRKADETELVLGRNPVLECLRAKVPATALYVALGTDADERVTESVQIAADRGISILEVPRTDLDRMSNHGLHQGLGLQVPPYAYAHPDDLLATARADAAPALLVALDNISDPRNLGAIVRSVAAFAGHGVVIPQRRSASVTAVAWRTSAGAAARVPVARATNLNRTLKSFADAGLQIVGLDAGGDTTLDELDATGPTVVVVGSEGKGLSRLVREHCDAIVSIPMAGPTESLNASVAAGVVLAEIARQRRS.

Positions 1–71 (MAGNSQRRGA…QRAGRKADET (71 aa)) are disordered. 3 residues coordinate S-adenosyl-L-methionine: G266, I286, and L295.

It belongs to the class IV-like SAM-binding methyltransferase superfamily. RNA methyltransferase TrmH family.

This is an uncharacterized protein from Mycolicibacterium smegmatis (strain ATCC 700084 / mc(2)155) (Mycobacterium smegmatis).